The sequence spans 253 residues: Probable transcriptional regulatory protein Hore_12350 (253 aa).

The interval Met-1–Arg-21 is disordered.

The protein belongs to the TACO1 family.

It localises to the cytoplasm. In Halothermothrix orenii (strain H 168 / OCM 544 / DSM 9562), this protein is Probable transcriptional regulatory protein Hore_12350.